Consider the following 105-residue polypeptide: Photosystem II 5 kDa protein, chloroplastic (105 aa).

The N-terminal 77 residues, 1 to 77 (MASITMTTSF…ICSVAGVATA (77 aa)), are a transit peptide targeting the chloroplast.

Post-translationally, the maturation of the PSII-T precursor to its final form occurs through a two step process. First, a stromal intermediate is formed, which, upon translocation into the thylakoid membrane, is processed to the mature protein.

It localises to the plastid. The protein resides in the chloroplast thylakoid membrane. In terms of biological role, may be a component of the oxygen-evolving complex. The polypeptide is Photosystem II 5 kDa protein, chloroplastic (PSBT) (Gossypium hirsutum (Upland cotton)).